A 295-amino-acid chain; its full sequence is 4-hydroxy-tetrahydrodipicolinate synthase (295 aa).

Position 47 (T47) interacts with pyruvate. Residue Y135 is the Proton donor/acceptor of the active site. Catalysis depends on K163, which acts as the Schiff-base intermediate with substrate. I204 contacts pyruvate.

It belongs to the DapA family. As to quaternary structure, homotetramer; dimer of dimers.

It localises to the cytoplasm. The enzyme catalyses L-aspartate 4-semialdehyde + pyruvate = (2S,4S)-4-hydroxy-2,3,4,5-tetrahydrodipicolinate + H2O + H(+). The protein operates within amino-acid biosynthesis; L-lysine biosynthesis via DAP pathway; (S)-tetrahydrodipicolinate from L-aspartate: step 3/4. Catalyzes the condensation of (S)-aspartate-beta-semialdehyde [(S)-ASA] and pyruvate to 4-hydroxy-tetrahydrodipicolinate (HTPA). The polypeptide is 4-hydroxy-tetrahydrodipicolinate synthase (Caldicellulosiruptor bescii (strain ATCC BAA-1888 / DSM 6725 / KCTC 15123 / Z-1320) (Anaerocellum thermophilum)).